A 690-amino-acid polypeptide reads, in one-letter code: Polyphosphate kinase (690 aa).

N45 is a binding site for ATP. R375 and R405 together coordinate Mg(2+). Catalysis depends on H435, which acts as the Phosphohistidine intermediate. Y468, R564, and H592 together coordinate ATP.

Belongs to the polyphosphate kinase 1 (PPK1) family. Mg(2+) serves as cofactor. Post-translationally, an intermediate of this reaction is the autophosphorylated ppk in which a phosphate is covalently linked to a histidine residue through a N-P bond.

It catalyses the reaction [phosphate](n) + ATP = [phosphate](n+1) + ADP. In terms of biological role, catalyzes the reversible transfer of the terminal phosphate of ATP to form a long-chain polyphosphate (polyP). The chain is Polyphosphate kinase from Pseudomonas aeruginosa (strain ATCC 15692 / DSM 22644 / CIP 104116 / JCM 14847 / LMG 12228 / 1C / PRS 101 / PAO1).